A 353-amino-acid polypeptide reads, in one-letter code: DNA polymerase IV (353 aa).

One can recognise a UmuC domain in the interval Ile-4–Gly-185. Mg(2+)-binding residues include Asp-8 and Asp-103. Residue Glu-104 is part of the active site.

It belongs to the DNA polymerase type-Y family. Monomer. Mg(2+) serves as cofactor.

The protein resides in the cytoplasm. The catalysed reaction is DNA(n) + a 2'-deoxyribonucleoside 5'-triphosphate = DNA(n+1) + diphosphate. Functionally, poorly processive, error-prone DNA polymerase involved in untargeted mutagenesis. Copies undamaged DNA at stalled replication forks, which arise in vivo from mismatched or misaligned primer ends. These misaligned primers can be extended by PolIV. Exhibits no 3'-5' exonuclease (proofreading) activity. May be involved in translesional synthesis, in conjunction with the beta clamp from PolIII. The polypeptide is DNA polymerase IV (Serratia proteamaculans (strain 568)).